A 1055-amino-acid polypeptide reads, in one-letter code: Focal adhesion kinase 1 (1055 aa).

Residues 1 to 29 (MAAAYLDPNLNHTPSSSTKTHLGTGTERS) are disordered. Alanine 2 carries the post-translational modification N-acetylalanine. Position 5 is a phosphotyrosine (tyrosine 5). Polar residues predominate over residues 10–27 (LNHTPSSSTKTHLGTGTE). Threonine 13 carries the phosphothreonine modification. A phosphoserine mark is found at serine 29 and serine 54. Residues 35–355 (RVLKVFHYFE…GYCRLVNGAT (321 aa)) enclose the FERM domain. Lysine 152 participates in a covalent cross-link: Glycyl lysine isopeptide (Lys-Gly) (interchain with G-Cter in SUMO). At tyrosine 397 the chain carries Phosphotyrosine; by autocatalysis. Residue tyrosine 407 is modified to Phosphotyrosine. One can recognise a Protein kinase domain in the interval 422-680 (IELGRCIGEG…ELKAQLSTIL (259 aa)). ATP contacts are provided by residues 428 to 434 (IGEGQFG), lysine 454, and 500 to 502 (ELC). The active-site Proton acceptor is aspartate 546. A phosphotyrosine mark is found at tyrosine 570 and tyrosine 576. Tyrosine 577 carries the phosphotyrosine; by RET and SRC modification. The residue at position 580 (serine 580) is a Phosphoserine. Over residues 685–697 (VQQEERMRMESRR) the composition is skewed to basic and acidic residues. 2 disordered regions span residues 685-734 (VQQE…PSPQ) and 837-923 (VRLS…LDRS). An interaction with TGFB1I1 region spans residues 707–1055 (GSDEAPPKPS…LKMLGQTRPH (349 aa)). Serine 722 bears the Phosphoserine mark. Serine 732 bears the Phosphoserine; by CDK5 mark. The span at 837–849 (VRLSRGSIDREDG) shows a compositional bias: basic and acidic residues. Serine 843 bears the Phosphoserine mark. Tyrosine 861 bears the Phosphotyrosine mark. Positions 869–880 (PAAPPKKPPRPG) are enriched in pro residues. Residues 886–896 (SNLSSISSPAE) show a composition bias toward polar residues. Position 913 is a phosphoserine (serine 913). The interaction with ARHGEF28 stretch occupies residues 915–1055 (PPTANLDRSN…LKMLGQTRPH (141 aa)). Threonine 917 bears the Phosphothreonine mark. The residue at position 928 (tyrosine 928) is a Phosphotyrosine.

The protein belongs to the protein kinase superfamily. Tyr protein kinase family. FAK subfamily. In terms of assembly, interacts with GIT1. Component of a complex that contains at least FER, CTTN and PTK2/FAK1. Interacts with BMX. Interacts with STEAP4. Interacts with ZFYVE21. Interacts with ESR1. Interacts with PIK3R1 or PIK3R2. Interacts with FGR, FLT4 and RET. Interacts with EPHA2 in resting cells; activation of EPHA2 recruits PTPN11, leading to dephosphorylation of PTK2/FAK1 and dissociation of the complex. Interacts with EPHA1 (kinase activity-dependent). Interacts with P53/TP53. Interacts (via first Pro-rich region) with CAS family members (via SH3 domain), including BCAR1, BCAR3, and CASS4. Interacts with NEDD9 (via SH3 domain). Interacts with TGFB1I1. Interacts with SRC, GRB2 and GRB7. Interacts with ARHGEF28. Interacts with SHB. Part of a complex composed of THSD1, PTK2/FAK1, TLN1 and VCL. Interacts with PXN and TLN1. Interacts with SORBS1. Interacts with STAT1. Interacts with WASL. Interacts with ARHGAP26 and SHC1. Interacts with RB1CC1; this inhibits PTK2/FAK1 activity and activation of downstream signaling pathways. Interacts with ARHGEF7. Interacts with MDM2. Interacts with PIAS1. Interacts with DCC. Interacts with LPXN (via LD motif 3). Interacts with MISP. Interacts with EMP2; regulates PTK2 activation and localization. Interacts with DSCAM. Interacts with AMBRA1. Interacts (when tyrosine-phosphorylated) with tensin TNS1; the interaction is increased by phosphorylation of TNS1. Post-translationally, phosphorylated on tyrosine residues upon activation, e.g. upon integrin signaling. Tyr-397 is the major autophosphorylation site, but other kinases can also phosphorylate this residue. Phosphorylation at Tyr-397 promotes interaction with SRC and SRC family members, leading to phosphorylation at Tyr-576, Tyr-577 and at additional tyrosine residues. FGR promotes phosphorylation at Tyr-397 and Tyr-576. FER promotes phosphorylation at Tyr-577, Tyr-861 and Tyr-928, even when cells are not adherent. Tyr-397, Tyr-576 and Ser-722 are phosphorylated only when cells are adherent. Phosphorylation at Tyr-397 is important for interaction with BMX, PIK3R1 and SHC1. Phosphorylation at Tyr-928 is important for interaction with GRB2. Dephosphorylated by PTPN11; PTPN11 is recruited to PTK2 via EPHA2 (tyrosine phosphorylated). Microtubule-induced dephosphorylation at Tyr-397 is crucial for the induction of focal adhesion disassembly; this dephosphorylation could be catalyzed by PTPN11 and regulated by ZFYVE21. Phosphorylation on tyrosine residues is enhanced by NTN1. Sumoylated; this enhances autophosphorylation.

Its subcellular location is the cell junction. The protein localises to the focal adhesion. The protein resides in the cell membrane. It is found in the cytoplasm. It localises to the perinuclear region. Its subcellular location is the cell cortex. The protein localises to the cytoskeleton. The protein resides in the microtubule organizing center. It is found in the centrosome. It localises to the nucleus. Its subcellular location is the cilium basal body. It carries out the reaction L-tyrosyl-[protein] + ATP = O-phospho-L-tyrosyl-[protein] + ADP + H(+). Subject to autoinhibition, mediated by interactions between the FERM domain and the kinase domain. Activated by autophosphorylation at Tyr-397. This promotes interaction with SRC and phosphorylation at Tyr-576 and Tyr-577 in the kinase activation loop by SRC. Phosphorylation at Tyr-397, Tyr-576 and Tyr-577 is required for maximal kinase activity. Functionally, non-receptor protein-tyrosine kinase that plays an essential role in regulating cell migration, adhesion, spreading, reorganization of the actin cytoskeleton, formation and disassembly of focal adhesions and cell protrusions, cell cycle progression, cell proliferation and apoptosis. Required for early embryonic development and placenta development. Required for embryonic angiogenesis, normal cardiomyocyte migration and proliferation, and normal heart development. Regulates axon growth and neuronal cell migration, axon branching and synapse formation; required for normal development of the nervous system. Plays a role in osteogenesis and differentiation of osteoblasts. Functions in integrin signal transduction, but also in signaling downstream of numerous growth factor receptors, G-protein coupled receptors (GPCR), EPHA2, netrin receptors and LDL receptors. Forms multisubunit signaling complexes with SRC and SRC family members upon activation; this leads to the phosphorylation of additional tyrosine residues, creating binding sites for scaffold proteins, effectors and substrates. Regulates numerous signaling pathways. Promotes activation of phosphatidylinositol 3-kinase and the AKT1 signaling cascade. Promotes activation of MAPK1/ERK2, MAPK3/ERK1 and the MAP kinase signaling cascade. Promotes localized and transient activation of guanine nucleotide exchange factors (GEFs) and GTPase-activating proteins (GAPs), and thereby modulates the activity of Rho family GTPases. Signaling via CAS family members mediates activation of RAC1. Phosphorylates NEDD9 following integrin stimulation. Recruits the ubiquitin ligase MDM2 to P53/TP53 in the nucleus, and thereby regulates P53/TP53 activity, P53/TP53 ubiquitination and proteasomal degradation. Phosphorylates SRC; this increases SRC kinase activity. Phosphorylates ACTN1, ARHGEF7, GRB7, RET and WASL. Promotes phosphorylation of PXN and STAT1; most likely PXN and STAT1 are phosphorylated by a SRC family kinase that is recruited to autophosphorylated PTK2/FAK1, rather than by PTK2/FAK1 itself. Promotes phosphorylation of BCAR1; GIT2 and SHC1; this requires both SRC and PTK2/FAK1. Promotes phosphorylation of BMX and PIK3R1. In terms of biological role, does not contain a kinase domain and inhibits PTK2/FAK1 phosphorylation and signaling. Its enhanced expression can attenuate the nuclear accumulation of LPXN and limit its ability to enhance serum response factor (SRF)-dependent gene transcription. This is Focal adhesion kinase 1 from Rattus norvegicus (Rat).